The primary structure comprises 111 residues: Large ribosomal subunit protein uL22 (111 aa).

It belongs to the universal ribosomal protein uL22 family. As to quaternary structure, part of the 50S ribosomal subunit.

This protein binds specifically to 23S rRNA; its binding is stimulated by other ribosomal proteins, e.g. L4, L17, and L20. It is important during the early stages of 50S assembly. It makes multiple contacts with different domains of the 23S rRNA in the assembled 50S subunit and ribosome. Functionally, the globular domain of the protein is located near the polypeptide exit tunnel on the outside of the subunit, while an extended beta-hairpin is found that lines the wall of the exit tunnel in the center of the 70S ribosome. This chain is Large ribosomal subunit protein uL22, found in Stenotrophomonas maltophilia (strain R551-3).